Here is a 1263-residue protein sequence, read N- to C-terminus: DNA-directed RNA polymerase subunit beta (1263 aa).

It belongs to the RNA polymerase beta chain family. As to quaternary structure, the RNAP catalytic core consists of 2 alpha, 1 beta, 1 beta' and 1 omega subunit. When a sigma factor is associated with the core the holoenzyme is formed, which can initiate transcription.

The enzyme catalyses RNA(n) + a ribonucleoside 5'-triphosphate = RNA(n+1) + diphosphate. DNA-dependent RNA polymerase catalyzes the transcription of DNA into RNA using the four ribonucleoside triphosphates as substrates. This is DNA-directed RNA polymerase subunit beta from Thermotoga sp. (strain RQ2).